The sequence spans 289 residues: Rhodopsin (289 aa).

At Y1–A7 the chain is on the extracellular side. A helical membrane pass occupies residues Y8 to V32. The Cytoplasmic segment spans residues T33–N44. A helical transmembrane segment spans residues Y45–Y67. Residues T68–C81 are Extracellular-facing. A disulfide bond links C81 and C158. A helical membrane pass occupies residues N82–I104. Positions E105–W107 match the 'Ionic lock' involved in activated form stabilization motif. The Cytoplasmic segment spans residues E105 to H123. The helical transmembrane segment at A124–V144 threads the bilayer. Over G145 to S173 the chain is Extracellular. The N-linked (GlcNAc...) asparagine glycan is linked to N171. The helical transmembrane segment at F174–G195 threads the bilayer. The Cytoplasmic portion of the chain corresponds to R196–R223. A helical transmembrane segment spans residues M224–W245. Topologically, residues I246–I257 are extracellular. Residues F258–C279 traverse the membrane as a helical segment. K267 is modified (N6-(retinylidene)lysine). Topologically, residues M280 to I289 are cytoplasmic.

The protein belongs to the G-protein coupled receptor 1 family. Opsin subfamily. In terms of processing, phosphorylated on some or all of the serine and threonine residues present in the C-terminal region. Post-translationally, contains one covalently linked retinal chromophore.

It is found in the membrane. The protein resides in the cell projection. The protein localises to the cilium. Its subcellular location is the photoreceptor outer segment. Functionally, photoreceptor required for image-forming vision at low light intensity. While most salt water fish species use retinal as chromophore, most freshwater fish use 3-dehydroretinal, or a mixture of retinal and 3-dehydroretinal. Light-induced isomerization of 11-cis to all-trans retinal triggers a conformational change that activates signaling via G-proteins. Subsequent receptor phosphorylation mediates displacement of the bound G-protein alpha subunit by arrestin and terminates signaling. This is Rhodopsin (rho) from Abyssocottus korotneffi (Baikalian deep-water sculpin).